The following is a 376-amino-acid chain: N-acetyldiaminopimelate deacetylase (376 aa).

The active site involves D69. The active-site Proton acceptor is the E128.

Belongs to the peptidase M20A family. N-acetyldiaminopimelate deacetylase subfamily.

The catalysed reaction is N-acetyl-(2S,6S)-2,6-diaminopimelate + H2O = (2S,6S)-2,6-diaminopimelate + acetate. It functions in the pathway amino-acid biosynthesis; L-lysine biosynthesis via DAP pathway; LL-2,6-diaminopimelate from (S)-tetrahydrodipicolinate (acetylase route): step 3/3. Catalyzes the conversion of N-acetyl-diaminopimelate to diaminopimelate and acetate. This is N-acetyldiaminopimelate deacetylase from Streptococcus pneumoniae (strain P1031).